The chain runs to 339 residues: MRVYYDRDADLNLIKGKKVVIVGYGSQGHAHALNLKDSGVKDVAIALRKGSATAKKAEAAGFKVMEVAEAAKWADVMMMLTPDELQGEIYREHLHDNMKQGAALLFAHGLNVHFNLIEPRADLDVLMVAPKGPGHTVRSEYQRGGGVPSLIAIHKDSSGNAHDLGLSYASAIGGGRAGIIETSFKEECETDLFGEQVVLCGGLVELIKAGFETLVEAGYAPEMAYFECLHEVKLIVDLIYEGGIANMNYSISNTAEYGEYVTGPRIVTAETKAEMKRVLADIQNGIFTRNWMLENKVNQTSFKATRAKLAQHPIEEVGAKLREMMPWIKKGALVDKTKN.

One can recognise a KARI N-terminal Rossmann domain in the interval 1–182 (MRVYYDRDAD…GGGRAGIIET (182 aa)). NADP(+)-binding positions include 24–27 (YGSQ), Arg48, Ser51, Thr53, and 83–86 (DELQ). His108 is an active-site residue. An NADP(+)-binding site is contributed by Gly134. Positions 183-328 (SFKEECETDL…AKLREMMPWI (146 aa)) constitute a KARI C-terminal knotted domain. Mg(2+) is bound by residues Asp191, Glu195, Glu227, and Glu231. A substrate-binding site is contributed by Ser252.

Belongs to the ketol-acid reductoisomerase family. Mg(2+) serves as cofactor.

It catalyses the reaction (2R)-2,3-dihydroxy-3-methylbutanoate + NADP(+) = (2S)-2-acetolactate + NADPH + H(+). The enzyme catalyses (2R,3R)-2,3-dihydroxy-3-methylpentanoate + NADP(+) = (S)-2-ethyl-2-hydroxy-3-oxobutanoate + NADPH + H(+). It functions in the pathway amino-acid biosynthesis; L-isoleucine biosynthesis; L-isoleucine from 2-oxobutanoate: step 2/4. It participates in amino-acid biosynthesis; L-valine biosynthesis; L-valine from pyruvate: step 2/4. Involved in the biosynthesis of branched-chain amino acids (BCAA). Catalyzes an alkyl-migration followed by a ketol-acid reduction of (S)-2-acetolactate (S2AL) to yield (R)-2,3-dihydroxy-isovalerate. In the isomerase reaction, S2AL is rearranged via a Mg-dependent methyl migration to produce 3-hydroxy-3-methyl-2-ketobutyrate (HMKB). In the reductase reaction, this 2-ketoacid undergoes a metal-dependent reduction by NADPH to yield (R)-2,3-dihydroxy-isovalerate. The sequence is that of Ketol-acid reductoisomerase (NADP(+)) from Rhodopseudomonas palustris (strain BisB5).